A 594-amino-acid chain; its full sequence is Keratin, type II cytoskeletal 2 oral (594 aa).

Residues 1-164 (MSRQACKKSF…DPQIGQVKAQ (164 aa)) form a head region. Arginine 85 and arginine 104 each carry omega-N-methylarginine. Residues 165 to 200 (EREQIKTLNNKFASFIDKVRFLEQQNKVLETKWELL) form a coil 1A region. The 316-residue stretch at 165 to 480 (EREQIKTLNN…KLLEGEECRL (316 aa)) folds into the IF rod domain. Positions 201 to 221 (QQQTIRSGSGPQNLEPFFESY) are linker 1. The segment at 222–313 (ISCLRKQLDS…TLYDMELSQI (92 aa)) is coil 1B. Residues 314–337 (QSHVSDTSVVLSMDNNRCLDLDSI) form a linker 12 region. The coil 2 stretch occupies residues 338-476 (IAEVKAQYED…ATYRKLLEGE (139 aa)). The segment at 477 to 594 (ECRLSGEFQN…TTSSSQQRSK (118 aa)) is tail. The tract at residues 497–594 (TSTSSSGSFR…TTSSSQQRSK (98 aa)) is disordered. The segment covering 506-522 (RGTGGSNYGGDSSGRSG) has biased composition (gly residues). Over residues 523-551 (GSSSSSSRGSSSRGSSGSRLGSGGSISVS) the composition is skewed to low complexity. Omega-N-methylarginine is present on arginine 541. A compositionally biased stretch (polar residues) spans 552–564 (QQRMGFNSGGSQT). Low complexity predominate over residues 565 to 594 (SVGSSYKSGRGGSSSVQFSQTTSSSQQRSK).

Belongs to the intermediate filament family. Heterotetramer of two type I and two type II keratins.

Its function is as follows. Probably contributes to terminal cornification. In Mus musculus (Mouse), this protein is Keratin, type II cytoskeletal 2 oral.